Consider the following 415-residue polypeptide: Arrestin red cell isoform 3 (415 aa).

It belongs to the arrestin family.

The protein localises to the cytoplasm. This chain is Arrestin red cell isoform 3, found in Oncorhynchus mykiss (Rainbow trout).